The following is a 341-amino-acid chain: S-adenosylmethionine:tRNA ribosyltransferase-isomerase (341 aa).

This sequence belongs to the QueA family. In terms of assembly, monomer.

The protein localises to the cytoplasm. The catalysed reaction is 7-aminomethyl-7-carbaguanosine(34) in tRNA + S-adenosyl-L-methionine = epoxyqueuosine(34) in tRNA + adenine + L-methionine + 2 H(+). The protein operates within tRNA modification; tRNA-queuosine biosynthesis. In terms of biological role, transfers and isomerizes the ribose moiety from AdoMet to the 7-aminomethyl group of 7-deazaguanine (preQ1-tRNA) to give epoxyqueuosine (oQ-tRNA). This is S-adenosylmethionine:tRNA ribosyltransferase-isomerase from Pelotomaculum thermopropionicum (strain DSM 13744 / JCM 10971 / SI).